Here is a 285-residue protein sequence, read N- to C-terminus: TATA box-binding protein-associated factor RNA polymerase I subunit D (285 aa).

Disordered regions lie at residues Met1–Thr49 and Lys85–Ile112. A compositionally biased stretch (polar residues) spans Gly21–Pro39. Ser24 is subject to Phosphoserine. Residues Lys85–Gly104 show a composition bias toward basic residues. A Phosphoserine modification is found at Ser134. Residues His193–Ser219 form a disordered region. At Ser229 the chain carries Phosphoserine. Composition is skewed to basic and acidic residues over residues Asn242–Thr264 and Lys273–Ser285. Positions Asn242–Ser285 are disordered.

In terms of assembly, component of the transcription factor SL1/TIF-IB complex, composed of TBP and at least TAF1A, TAF1B, TAF1C and TAF1D. Interacts with UBTF.

It is found in the nucleus. Component of the transcription factor SL1/TIF-IB complex, which is involved in the assembly of the PIC (preinitiation complex) during RNA polymerase I-dependent transcription. The rate of PIC formation probably is primarily dependent on the rate of association of SL1/TIF-IB with the rDNA promoter. SL1/TIF-IB is involved in stabilization of nucleolar transcription factor 1/UBTF on rDNA. Formation of SL1/TIF-IB excludes the association of TBP with TFIID subunits. This chain is TATA box-binding protein-associated factor RNA polymerase I subunit D (Taf1d), found in Rattus norvegicus (Rat).